We begin with the raw amino-acid sequence, 244 residues long: NAD(P)H-quinone oxidoreductase subunit K (244 aa).

[4Fe-4S] cluster contacts are provided by Cys-60, Cys-61, Cys-125, and Cys-156.

Belongs to the complex I 20 kDa subunit family. As to quaternary structure, NDH-1 can be composed of about 15 different subunits; different subcomplexes with different compositions have been identified which probably have different functions. It depends on [4Fe-4S] cluster as a cofactor.

The protein localises to the cellular thylakoid membrane. It catalyses the reaction a plastoquinone + NADH + (n+1) H(+)(in) = a plastoquinol + NAD(+) + n H(+)(out). It carries out the reaction a plastoquinone + NADPH + (n+1) H(+)(in) = a plastoquinol + NADP(+) + n H(+)(out). NDH-1 shuttles electrons from an unknown electron donor, via FMN and iron-sulfur (Fe-S) centers, to quinones in the respiratory and/or the photosynthetic chain. The immediate electron acceptor for the enzyme in this species is believed to be plastoquinone. Couples the redox reaction to proton translocation, and thus conserves the redox energy in a proton gradient. Cyanobacterial NDH-1 also plays a role in inorganic carbon-concentration. The polypeptide is NAD(P)H-quinone oxidoreductase subunit K (Prochlorococcus marinus (strain MIT 9515)).